Here is a 305-residue protein sequence, read N- to C-terminus: MRLKVMMDVNKKTKIRHRNELNHTLAQLPLPAKRVMYMALAPIDSKEPLERGRVFKIRAEDLAALAKITPSLAYRQLKEGGKLLGASKISLRGDDIIALAKELNLPFTAKNSPEELDLNIIEWIAYSPDEGYLSLKFTRTIEPYISSLIGKKNKFTTQLLTASLRLSSQYSSSLYQLIRKHYSNFKKKNYFIISVDELKEELIAYTFDKDGNIEYKYPDFPIFKRDVLNKAIAEIKKKTEISFVGFTVHEKEGRKISKLKFEFVVDEDEFSGDKDDEAFFMNLSEADAAFLKVFDETVPPKKAKG.

It belongs to the initiator RepB protein family. As to quaternary structure, homodimer.

In terms of biological role, initiation for plasmid R6K DNA replication. The polypeptide is PI protein (pir) (Escherichia coli).